Consider the following 575-residue polypeptide: Glycosyltransferase family 92 protein At1g27200 (575 aa).

Residues 22–44 (FLSQRYLILCFCCFFVLLFFLSS) form a helical membrane-spanning segment. The region spanning 293–540 (LCVCTMLWNQ…TEAIEPPDWK (248 aa)) is the GT92 domain.

The protein belongs to the glycosyltransferase 92 family.

Its subcellular location is the membrane. This chain is Glycosyltransferase family 92 protein At1g27200, found in Arabidopsis thaliana (Mouse-ear cress).